Here is an 816-residue protein sequence, read N- to C-terminus: Homeobox-leucine zipper protein ROC9 (816 aa).

The disordered stretch occupies residues 26–104; the sequence is VFGRKNGPAA…RRKNYHRHTA (79 aa). Residues 92–101 are compositionally biased toward basic residues; the sequence is KKRRRKNYHR. Positions 95–154 form a DNA-binding region, homeobox; it reads RRKNYHRHTAEQIRIMEALFKESPHPDERQRQQVSKQLGLSARQVKFWFQNRRTQIKAVQ. Residues 149 to 182 adopt a coiled-coil conformation; sequence QIKAVQERHENSLLKSELEKLQDEHRAMRELAKK. Positions 265–296 are disordered; sequence KSAADGIASPPCSASAGAMQTNSRSPPLHDHD. Residues 302–541 form the START domain; that stretch reads HDDDKPRILE…LQLQCERMVF (240 aa).

Belongs to the HD-ZIP homeobox family. Class IV subfamily.

It localises to the nucleus. In terms of biological role, probable transcription factor. This is Homeobox-leucine zipper protein ROC9 (ROC9) from Oryza sativa subsp. japonica (Rice).